A 672-amino-acid polypeptide reads, in one-letter code: tRNA 5-methylaminomethyl-2-thiouridine biosynthesis bifunctional protein MnmC (672 aa).

Residues 1-243 form a tRNA (mnm(5)s(2)U34)-methyltransferase region; it reads MTSITHAELG…KREMIAGCME (243 aa). Residues 269 to 672 form an FAD-dependent cmnm(5)s(2)U34 oxidoreductase region; it reads IGGGIASAAL…LRKGKAITEL (404 aa).

In the N-terminal section; belongs to the methyltransferase superfamily. tRNA (mnm(5)s(2)U34)-methyltransferase family. It in the C-terminal section; belongs to the DAO family. FAD serves as cofactor.

It is found in the cytoplasm. It catalyses the reaction 5-aminomethyl-2-thiouridine(34) in tRNA + S-adenosyl-L-methionine = 5-methylaminomethyl-2-thiouridine(34) in tRNA + S-adenosyl-L-homocysteine + H(+). In terms of biological role, catalyzes the last two steps in the biosynthesis of 5-methylaminomethyl-2-thiouridine (mnm(5)s(2)U) at the wobble position (U34) in tRNA. Catalyzes the FAD-dependent demodification of cmnm(5)s(2)U34 to nm(5)s(2)U34, followed by the transfer of a methyl group from S-adenosyl-L-methionine to nm(5)s(2)U34, to form mnm(5)s(2)U34. The polypeptide is tRNA 5-methylaminomethyl-2-thiouridine biosynthesis bifunctional protein MnmC (Vibrio vulnificus (strain CMCP6)).